We begin with the raw amino-acid sequence, 874 residues long: Alanine--tRNA ligase (874 aa).

The Zn(2+) site is built by histidine 564, histidine 568, cysteine 665, and histidine 669.

Belongs to the class-II aminoacyl-tRNA synthetase family. The cofactor is Zn(2+).

The protein resides in the cytoplasm. The catalysed reaction is tRNA(Ala) + L-alanine + ATP = L-alanyl-tRNA(Ala) + AMP + diphosphate. Catalyzes the attachment of alanine to tRNA(Ala) in a two-step reaction: alanine is first activated by ATP to form Ala-AMP and then transferred to the acceptor end of tRNA(Ala). Also edits incorrectly charged Ser-tRNA(Ala) and Gly-tRNA(Ala) via its editing domain. The protein is Alanine--tRNA ligase of Paraburkholderia xenovorans (strain LB400).